The following is a 522-amino-acid chain: Secreted RxLR effector protein 105 (522 aa).

The signal sequence occupies residues 1-21; that stretch reads MRGPCSVITALLVVASSQIAA. Positions 48-63 match the RxLR-dEER motif; that stretch reads RYLRGSQHVLDSNEER.

The protein belongs to the RxLR effector family.

The protein localises to the secreted. It localises to the host nucleus. Its subcellular location is the host cytoplasm. Functionally, secreted effector that dos not suppress the host cell death induced by cell death-inducing proteins. This is Secreted RxLR effector protein 105 from Plasmopara viticola (Downy mildew of grapevine).